The following is a 196-amino-acid chain: Probable phosphoheptose isomerase (196 aa).

In terms of domain architecture, SIS spans 43–196; that stretch reads IVNVFNSGGK…MICSVIDSYY (154 aa). 58-60 lines the substrate pocket; that stretch reads NGG. Residues His67 and Glu71 each contribute to the Zn(2+) site. Substrate contacts are provided by residues Glu71, 100–101, 126–128, Ser131, and Gln178; these read ND and STS. Positions 178 and 186 each coordinate Zn(2+).

It belongs to the SIS family. GmhA subfamily. It depends on Zn(2+) as a cofactor.

Its subcellular location is the cytoplasm. It catalyses the reaction 2 D-sedoheptulose 7-phosphate = D-glycero-alpha-D-manno-heptose 7-phosphate + D-glycero-beta-D-manno-heptose 7-phosphate. Its pathway is carbohydrate biosynthesis; D-glycero-D-manno-heptose 7-phosphate biosynthesis; D-glycero-alpha-D-manno-heptose 7-phosphate and D-glycero-beta-D-manno-heptose 7-phosphate from sedoheptulose 7-phosphate: step 1/1. Its function is as follows. Catalyzes the isomerization of sedoheptulose 7-phosphate in D-glycero-D-manno-heptose 7-phosphate. This Thermoplasma volcanium (strain ATCC 51530 / DSM 4299 / JCM 9571 / NBRC 15438 / GSS1) protein is Probable phosphoheptose isomerase.